The primary structure comprises 720 residues: Zinc finger protein 408 (720 aa).

A disordered region spans residues 201–350 (VQQEVASPGE…GPAGSSPKQG (150 aa)). A compositionally biased stretch (polar residues) spans 275 to 285 (LQSNSATQQDP). Positions 287-296 (GSGASFSSSA) are enriched in low complexity. At Thr322 the chain carries Phosphothreonine. 10 consecutive C2H2-type zinc fingers follow at residues 353 to 375 (YRCGECGKAFLQLCHLKKHAFVH), 381 to 403 (FLCTECGKSYSSEESFKAHMLGH), 409 to 431 (FPCPQCDKAYGTQRDLKEHQVVH), 437 to 459 (FACDQCGKAFARRPSLRLHRKTH), 468 to 490 (CPCPVCGRPLANQGSLRNHMRLH), 496 to 518 (FLCPHCGRAFRQRGNLRGHLRLH), 524 to 546 (YRCPHCADAFPQLPELRRHLISH), 551 to 573 (HLCPVCGKALRDPHTLRAHERLH), 579 to 601 (FPCPQCGRAYTLATKLRRHLKSH), and 607 to 629 (YRCPTCGMGYTLPQSLRRHQLSH).

In terms of tissue distribution, highest expression is observed in adult retina; abundantly expressed in the fetal eye. In the retina, it is detected in the outer nuclear layer, especially cone and rod photoreceptor cells, ganglion cell layer and both outer and inner plexiform layers (at protein level). Expressed in retinal blood vessels (at protein level).

It is found in the nucleus. In terms of biological role, may be involved in transcriptional regulation. The protein is Zinc finger protein 408 (ZNF408) of Homo sapiens (Human).